The sequence spans 166 residues: uncharacterized protein (166 aa).

A2 is modified (N-acetylalanine).

In terms of assembly, homodimer.

This is an uncharacterized protein from Arabidopsis thaliana (Mouse-ear cress).